The chain runs to 148 residues: uncharacterized protein (148 aa).

One can recognise an HTH asnC-type domain in the interval 4–65; it reads MDKVDLQLIK…IPNLEKLNYM (62 aa). The segment at residues 23–42 is a DNA-binding region (H-T-H motif); sequence YRELAEMLGTTRQRVARKVD.

This is an uncharacterized protein from Pyrococcus furiosus (strain ATCC 43587 / DSM 3638 / JCM 8422 / Vc1).